We begin with the raw amino-acid sequence, 251 residues long: Triosephosphate isomerase (251 aa).

Residue 9 to 11 (NWK) coordinates substrate. His95 acts as the Electrophile in catalysis. The Proton acceptor role is filled by Glu167. Substrate-binding positions include Gly173, Ser213, and 234 to 235 (GG).

This sequence belongs to the triosephosphate isomerase family. As to quaternary structure, homodimer.

The protein resides in the cytoplasm. The catalysed reaction is D-glyceraldehyde 3-phosphate = dihydroxyacetone phosphate. Its pathway is carbohydrate biosynthesis; gluconeogenesis. It functions in the pathway carbohydrate degradation; glycolysis; D-glyceraldehyde 3-phosphate from glycerone phosphate: step 1/1. Functionally, involved in the gluconeogenesis. Catalyzes stereospecifically the conversion of dihydroxyacetone phosphate (DHAP) to D-glyceraldehyde-3-phosphate (G3P). The polypeptide is Triosephosphate isomerase (Latilactobacillus sakei subsp. sakei (strain 23K) (Lactobacillus sakei subsp. sakei)).